A 405-amino-acid polypeptide reads, in one-letter code: Replication factor C large subunit (405 aa).

Residue 47 to 54 (GPPGVGKT) participates in ATP binding.

This sequence belongs to the activator 1 small subunits family. RfcL subfamily. Heteropentamer composed of four small subunits (RfcS) and one large subunit (RfcL). Probably interacts with PCNA subunit PCNA3.

In terms of biological role, part of the RFC clamp loader complex which loads the PCNA sliding clamp onto DNA. The complex possesses DNA-dependent ATPase activity. The sequence is that of Replication factor C large subunit (rfcL) from Saccharolobus solfataricus (strain ATCC 35092 / DSM 1617 / JCM 11322 / P2) (Sulfolobus solfataricus).